Reading from the N-terminus, the 127-residue chain is Gamma-synuclein (127 aa).

2 tandem repeats follow at residues 20–30 (EKTKQGVTEAA) and 31–41 (EKTKEGVMYVG). The 4 X 11 AA tandem repeats of [EGSA]-K-T-K-[EQ]-[GQ]-V-X(4) stretch occupies residues 20 to 67 (EKTKQGVTEAAEKTKEGVMYVGAKTKENVVQSVTSVAEKTKEQANAVS). A 3; approximate repeat occupies 42 to 56 (AKTKENVVQSVTSVA). Repeat unit 4 spans residues 57 to 67 (EKTKEQANAVS). 2 positions are modified to phosphoserine: Ser67 and Ser72. Positions 96 to 127 (RKEDLRPSAPQQEGEASKEKEEVAEEAQSGGD) are disordered. Residue Ser124 is modified to Phosphoserine; by BARK1, CaMK2 and CK2.

The protein belongs to the synuclein family. May be a centrosome-associated protein. Interacts with MYOC; affects its secretion and its aggregation. In terms of processing, phosphorylated. Phosphorylation by GRK5 appears to occur on residues distinct from the residue phosphorylated by other kinases. Highly expressed in brain, particularly in the substantia nigra. Also expressed in the corpus callosum, heart, skeletal muscle, ovary, testis, colon and spleen. Weak expression in pancreas, kidney and lung.

The protein localises to the cytoplasm. It localises to the perinuclear region. Its subcellular location is the cytoskeleton. The protein resides in the microtubule organizing center. It is found in the centrosome. The protein localises to the spindle. Its function is as follows. Plays a role in neurofilament network integrity. May be involved in modulating axonal architecture during development and in the adult. In vitro, increases the susceptibility of neurofilament-H to calcium-dependent proteases. May also function in modulating the keratin network in skin. Activates the MAPK and Elk-1 signal transduction pathway. The chain is Gamma-synuclein (SNCG) from Homo sapiens (Human).